The following is a 242-amino-acid chain: Lactate utilization protein A 2 (242 aa).

This sequence belongs to the LutA/YkgE family.

Is involved in L-lactate degradation and allows cells to grow with lactate as the sole carbon source. The polypeptide is Lactate utilization protein A 2 (Bacillus cereus (strain AH820)).